The sequence spans 540 residues: Glucose-6-phosphate isomerase (540 aa).

Catalysis depends on Glu-350, which acts as the Proton donor. Residues His-381 and Lys-503 contribute to the active site.

Belongs to the GPI family.

Its subcellular location is the cytoplasm. It catalyses the reaction alpha-D-glucose 6-phosphate = beta-D-fructose 6-phosphate. Its pathway is carbohydrate biosynthesis; gluconeogenesis. The protein operates within carbohydrate degradation; glycolysis; D-glyceraldehyde 3-phosphate and glycerone phosphate from D-glucose: step 2/4. Catalyzes the reversible isomerization of glucose-6-phosphate to fructose-6-phosphate. The protein is Glucose-6-phosphate isomerase of Burkholderia cenocepacia (strain ATCC BAA-245 / DSM 16553 / LMG 16656 / NCTC 13227 / J2315 / CF5610) (Burkholderia cepacia (strain J2315)).